A 204-amino-acid polypeptide reads, in one-letter code: Cytochrome c biogenesis ATP-binding export protein CcmA (204 aa).

The ABC transporter domain occupies 2-202 (LEIRNVTCIR…DSNELKKIRL (201 aa)). Position 34-41 (34-41 (GQNGAGKT)) interacts with ATP.

It belongs to the ABC transporter superfamily. CcmA exporter (TC 3.A.1.107) family. In terms of assembly, the complex is composed of two ATP-binding proteins (CcmA) and two transmembrane proteins (CcmB).

Its subcellular location is the cell inner membrane. The catalysed reaction is heme b(in) + ATP + H2O = heme b(out) + ADP + phosphate + H(+). In terms of biological role, part of the ABC transporter complex CcmAB involved in the biogenesis of c-type cytochromes; once thought to export heme, this seems not to be the case, but its exact role is uncertain. Responsible for energy coupling to the transport system. This is Cytochrome c biogenesis ATP-binding export protein CcmA from Aliivibrio fischeri (strain ATCC 700601 / ES114) (Vibrio fischeri).